Here is a 96-residue protein sequence, read N- to C-terminus: Integration host factor subunit beta (96 aa).

The interval 59-86 (RVGRNPKTGETVELDGKHVPHFKPGKEL) is disordered. Over residues 72–86 (LDGKHVPHFKPGKEL) the composition is skewed to basic and acidic residues.

Belongs to the bacterial histone-like protein family. Heterodimer of an alpha and a beta chain.

Its function is as follows. This protein is one of the two subunits of integration host factor, a specific DNA-binding protein that functions in genetic recombination as well as in transcriptional and translational control. The sequence is that of Integration host factor subunit beta from Pseudoalteromonas atlantica (strain T6c / ATCC BAA-1087).